Reading from the N-terminus, the 429-residue chain is Histidine--tRNA ligase (429 aa).

It belongs to the class-II aminoacyl-tRNA synthetase family. Homodimer.

The protein resides in the cytoplasm. It catalyses the reaction tRNA(His) + L-histidine + ATP = L-histidyl-tRNA(His) + AMP + diphosphate + H(+). This Prochlorococcus marinus subsp. pastoris (strain CCMP1986 / NIES-2087 / MED4) protein is Histidine--tRNA ligase.